Reading from the N-terminus, the 440-residue chain is Chromosome partition protein MukF (440 aa).

The segment at 208 to 236 (LSETSGTLRELQDTLEAAGDKLQANLLRI) is leucine-zipper.

Belongs to the MukF family. Interacts, and probably forms a ternary complex, with MukE and MukB via its C-terminal region. The complex formation is stimulated by calcium or magnesium. It is required for an interaction between MukE and MukB.

The protein resides in the cytoplasm. It is found in the nucleoid. In terms of biological role, involved in chromosome condensation, segregation and cell cycle progression. May participate in facilitating chromosome segregation by condensation DNA from both sides of a centrally located replisome during cell division. Not required for mini-F plasmid partitioning. Probably acts via its interaction with MukB and MukE. Overexpression results in anucleate cells. It has a calcium binding activity. This is Chromosome partition protein MukF from Shigella boydii serotype 18 (strain CDC 3083-94 / BS512).